Reading from the N-terminus, the 516-residue chain is Cytochrome P450 1A2 (516 aa).

O-linked (GlcNAc) serine glycosylation is present at S69. F226 provides a ligand contact to substrate. Residue C458 coordinates heme.

It belongs to the cytochrome P450 family. In terms of assembly, interacts with PGRMC1; the interaction requires PGRMC1 homodimerization. Heme serves as cofactor.

Its subcellular location is the endoplasmic reticulum membrane. The protein localises to the microsome membrane. The catalysed reaction is an organic molecule + reduced [NADPH--hemoprotein reductase] + O2 = an alcohol + oxidized [NADPH--hemoprotein reductase] + H2O + H(+). It carries out the reaction 17beta-estradiol + reduced [NADPH--hemoprotein reductase] + O2 = 2-hydroxy-17beta-estradiol + oxidized [NADPH--hemoprotein reductase] + H2O + H(+). It catalyses the reaction 17beta-estradiol + reduced [NADPH--hemoprotein reductase] + O2 = 4-hydroxy-17beta-estradiol + oxidized [NADPH--hemoprotein reductase] + H2O + H(+). The enzyme catalyses estrone + reduced [NADPH--hemoprotein reductase] + O2 = 2-hydroxyestrone + oxidized [NADPH--hemoprotein reductase] + H2O + H(+). The catalysed reaction is estrone + reduced [NADPH--hemoprotein reductase] + O2 = 4-hydroxyestrone + oxidized [NADPH--hemoprotein reductase] + H2O + H(+). It carries out the reaction cholesterol + reduced [NADPH--hemoprotein reductase] + O2 = 25-hydroxycholesterol + oxidized [NADPH--hemoprotein reductase] + H2O + H(+). It catalyses the reaction all-trans-retinol + reduced [NADPH--hemoprotein reductase] + O2 = all-trans-retinal + oxidized [NADPH--hemoprotein reductase] + 2 H2O + H(+). The enzyme catalyses all-trans-retinal + reduced [NADPH--hemoprotein reductase] + O2 = all-trans-retinoate + oxidized [NADPH--hemoprotein reductase] + H2O + 2 H(+). The catalysed reaction is (5Z,8Z,11Z,14Z)-eicosatetraenoate + reduced [NADPH--hemoprotein reductase] + O2 = (14R,15S)-epoxy-(5Z,8Z,11Z)-eicosatrienoate + oxidized [NADPH--hemoprotein reductase] + H2O + H(+). It carries out the reaction (5Z,8Z,11Z,14Z)-eicosatetraenoate + reduced [NADPH--hemoprotein reductase] + O2 = (14S,15R)-epoxy-(5Z,8Z,11Z)-eicosatrienoate + oxidized [NADPH--hemoprotein reductase] + H2O + H(+). It catalyses the reaction (5Z,8Z,11Z,14Z,17Z)-eicosapentaenoate + reduced [NADPH--hemoprotein reductase] + O2 = (17R,18S)-epoxy-(5Z,8Z,11Z,14Z)-eicosatetraenoate + oxidized [NADPH--hemoprotein reductase] + H2O + H(+). The enzyme catalyses (4Z,7Z,10Z,13Z,16Z,19Z)-docosahexaenoate + reduced [NADPH--hemoprotein reductase] + O2 = (19R,20S)-epoxy-(4Z,7Z,10Z,13Z,16Z)-docosapentaenoate + oxidized [NADPH--hemoprotein reductase] + H2O + H(+). The catalysed reaction is (5S)-hydroperoxy-(6E,8Z,11Z,14Z)-eicosatetraenoate = 5-oxo-(6E,8Z,11Z,14Z)-eicosatetraenoate + H2O. It carries out the reaction (12S)-hydroperoxy-(5Z,8Z,10E,14Z)-eicosatetraenoate = 12-oxo-(5Z,8Z,10E,14Z)-eicosatetraenoate + H2O. It catalyses the reaction (15S)-hydroperoxy-(5Z,8Z,11Z,13E)-eicosatetraenoate = 15-oxo-(5Z,8Z,11Z,13E)-eicosatetraenoate + H2O. The enzyme catalyses (13S)-hydroperoxy-(9Z,11E)-octadecadienoate = 13-oxo-(9Z,11E)-octadecadienoate + H2O. The catalysed reaction is (5Z,8Z,11Z,14Z)-eicosatetraenoate + reduced [NADPH--hemoprotein reductase] + O2 = 13-hydroxy-(5Z,8Z,11Z,14Z)-eicosatetraenoate + oxidized [NADPH--hemoprotein reductase] + H2O + H(+). It carries out the reaction (5Z,8Z,11Z,14Z)-eicosatetraenoate + reduced [NADPH--hemoprotein reductase] + O2 = 19-hydroxy-(5Z,8Z,11Z,14Z)-eicosatetraenoate + oxidized [NADPH--hemoprotein reductase] + H2O + H(+). It catalyses the reaction (9Z,12Z)-octadecadienoate + reduced [NADPH--hemoprotein reductase] + O2 = 11-hydroxy-(9Z,12Z)-octadecadienoate + oxidized [NADPH--hemoprotein reductase] + H2O + H(+). The protein operates within cofactor metabolism; retinol metabolism. Its pathway is steroid metabolism; cholesterol metabolism. It participates in lipid metabolism; arachidonate metabolism. Its function is as follows. A cytochrome P450 monooxygenase involved in the metabolism of various endogenous substrates, including fatty acids, steroid hormones and vitamins. Mechanistically, uses molecular oxygen inserting one oxygen atom into a substrate, and reducing the second into a water molecule, with two electrons provided by NADPH via cytochrome P450 reductase (NADPH--hemoprotein reductase). Catalyzes the hydroxylation of carbon-hydrogen bonds. Exhibits high catalytic activity for the formation of hydroxyestrogens from estrone (E1) and 17beta-estradiol (E2), namely 2-hydroxy E1 and E2. Metabolizes cholesterol toward 25-hydroxycholesterol, a physiological regulator of cellular cholesterol homeostasis. May act as a major enzyme for all-trans retinoic acid biosynthesis in the liver. Catalyzes two successive oxidative transformation of all-trans retinol to all-trans retinal and then to the active form all-trans retinoic acid. Primarily catalyzes stereoselective epoxidation of the last double bond of polyunsaturated fatty acids (PUFA), displaying a strong preference for the (R,S) stereoisomer. Catalyzes bisallylic hydroxylation and omega-1 hydroxylation of PUFA. May also participate in eicosanoids metabolism by converting hydroperoxide species into oxo metabolites (lipoxygenase-like reaction, NADPH-independent). Plays a role in the oxidative metabolism of xenobiotics. Catalyzes the N-hydroxylation of heterocyclic amines and the O-deethylation of phenacetin. Metabolizes caffeine via N3-demethylation. The chain is Cytochrome P450 1A2 (CYP1A2) from Balaenoptera acutorostrata (Common minke whale).